A 538-amino-acid polypeptide reads, in one-letter code: Putative outer membrane porin BglH (538 aa).

The signal sequence occupies residues 1–25 (MFRRNIITSAILLMAPLAFSAQSLA).

The protein belongs to the porin LamB (TC 1.B.3) family.

The protein resides in the cell outer membrane. Its function is as follows. May be a sugar porin with a broad carbohydrate specificity. This chain is Putative outer membrane porin BglH (bglH), found in Escherichia coli O6:H1 (strain CFT073 / ATCC 700928 / UPEC).